An 87-amino-acid polypeptide reads, in one-letter code: Small ribosomal subunit protein eS21 (87 aa).

Residue methionine 1 is modified to N-acetylmethionine.

This sequence belongs to the eukaryotic ribosomal protein eS21 family. As to quaternary structure, component of the small ribosomal subunit (SSU). Mature yeast ribosomes consist of a small (40S) and a large (60S) subunit. The 40S small subunit contains 1 molecule of ribosomal RNA (18S rRNA) and at least 33 different proteins. The large 60S subunit contains 3 rRNA molecules (25S, 5.8S and 5S rRNA) and at least 46 different proteins. Interacts with uS2A and uS2B, strongest interaction is with uS2B.

It is found in the cytoplasm. The protein localises to the nucleus. Component of the ribosome, a large ribonucleoprotein complex responsible for the synthesis of proteins in the cell. The small ribosomal subunit (SSU) binds messenger RNAs (mRNAs) and translates the encoded message by selecting cognate aminoacyl-transfer RNA (tRNA) molecules. The large subunit (LSU) contains the ribosomal catalytic site termed the peptidyl transferase center (PTC), which catalyzes the formation of peptide bonds, thereby polymerizing the amino acids delivered by tRNAs into a polypeptide chain. The nascent polypeptides leave the ribosome through a tunnel in the LSU and interact with protein factors that function in enzymatic processing, targeting, and the membrane insertion of nascent chains at the exit of the ribosomal tunnel. eS21 is required for the processing of the 20S rRNA-precursor to mature 18S rRNA in a late step of the maturation of 40S ribosomal subunits. Has a physiological role leading to 18S rRNA stability. This chain is Small ribosomal subunit protein eS21 (rps21), found in Schizosaccharomyces pombe (strain 972 / ATCC 24843) (Fission yeast).